The following is a 71-amino-acid chain: Protein CYSTEINE-RICH TRANSMEMBRANE MODULE 6 (71 aa).

Residues 1-12 (MSQYSQNQSSGA) are compositionally biased toward polar residues. Residues 1–36 (MSQYSQNQSSGAYPTPPVSTGPYVAPPPLGYPTNDT) are disordered. Residues 14–30 (PTPPVSTGPYVAPPPLG) show a composition bias toward pro residues. The helical transmembrane segment at 48 to 64 (SKGDGFLKGCLAAMCCC) threads the bilayer.

Belongs to the CYSTM1 family. As to quaternary structure, homodimer and heterodimers. Interacts with CYSTM7 and WIH1/CYSTM13. In terms of tissue distribution, mostly expressed in roots, stems, rosette leaves and siliques and, to a lower extent, in flowers and cauline leaves.

The protein localises to the cell membrane. It is found in the cytoplasm. In terms of biological role, involved in resistance to abiotic stress. The protein is Protein CYSTEINE-RICH TRANSMEMBRANE MODULE 6 of Arabidopsis thaliana (Mouse-ear cress).